The following is an 845-amino-acid chain: Protein P (845 aa).

Positions 1–179 (MPLSYQHFRK…FCGSPYSWEQ (179 aa)) are terminal protein domain (TP). Residues 180–348 (ELHHGRSVTK…YCLSHLVNLL (169 aa)) form a spacer region. Disordered regions lie at residues 186-205 (SVTKTSQRHGDESFCSQPSG), 222-245 (QPRLGLQPHQGPLATSQSGRSGSI), and 288-318 (YSHLSTSKRQSSSGHAVEFHKVPPNSARSQS). Residues 289 to 301 (SHLSTSKRQSSSG) show a composition bias toward polar residues. Positions 349–692 (EDWGPCADHG…YMNLYPVARQ (344 aa)) are polymerase/reverse transcriptase domain (RT). A Reverse transcriptase domain is found at 359 to 602 (EHHIRIPRTP…YSLNFMGYII (244 aa)). Residues Asp-431, Asp-553, and Asp-554 each contribute to the Mg(2+) site.

This sequence belongs to the hepadnaviridae P protein family.

The catalysed reaction is DNA(n) + a 2'-deoxyribonucleoside 5'-triphosphate = DNA(n+1) + diphosphate. The enzyme catalyses Endonucleolytic cleavage to 5'-phosphomonoester.. Its activity is regulated as follows. Activated by host HSP70 and HSP40 in vitro to be able to bind the epsilon loop of the pgRNA. Because deletion of the RNase H region renders the protein partly chaperone-independent, the chaperones may be needed indirectly to relieve occlusion of the RNA-binding site by this domain. Inhibited by several reverse-transcriptase inhibitors: Lamivudine, Adefovir and Entecavir. Its function is as follows. Multifunctional enzyme that converts the viral RNA genome into dsDNA in viral cytoplasmic capsids. This enzyme displays a DNA polymerase activity that can copy either DNA or RNA templates, and a ribonuclease H (RNase H) activity that cleaves the RNA strand of RNA-DNA heteroduplexes in a partially processive 3'- to 5'-endonucleasic mode. Neo-synthesized pregenomic RNA (pgRNA) are encapsidated together with the P protein, and reverse-transcribed inside the nucleocapsid. Initiation of reverse-transcription occurs first by binding the epsilon loop on the pgRNA genome, and is initiated by protein priming, thereby the 5'-end of (-)DNA is covalently linked to P protein. Partial (+)DNA is synthesized from the (-)DNA template and generates the relaxed circular DNA (RC-DNA) genome. After budding and infection, the RC-DNA migrates in the nucleus, and is converted into a plasmid-like covalently closed circular DNA (cccDNA). The activity of P protein does not seem to be necessary for cccDNA generation, and is presumably released from (+)DNA by host nuclear DNA repair machinery. In Hepatitis B virus genotype A3 (isolate Cameroon/CMR711/1994) (HBV-A), this protein is Protein P.